We begin with the raw amino-acid sequence, 364 residues long: Dermonecrotic toxin SPH (364 aa).

The first 17 residues, 1 to 17, serve as a signal peptide directing secretion; the sequence is MIRIFALITALAITVKC. The active-site Nucleophile is His29. Residues Glu49 and Asp51 each contribute to the Mg(2+) site. The active site involves His65. 2 cysteine pairs are disulfide-bonded: Cys69/Cys75 and Cys71/Cys215. Mg(2+) is bound at residue Asp109.

Belongs to the arthropod phospholipase D family. It depends on Mg(2+) as a cofactor. In terms of tissue distribution, expressed in salivary glands.

The protein resides in the secreted. It catalyses the reaction an N-(acyl)-sphingosylphosphocholine = an N-(acyl)-sphingosyl-1,3-cyclic phosphate + choline. The catalysed reaction is an N-(acyl)-sphingosylphosphoethanolamine = an N-(acyl)-sphingosyl-1,3-cyclic phosphate + ethanolamine. It carries out the reaction a 1-acyl-sn-glycero-3-phosphocholine = a 1-acyl-sn-glycero-2,3-cyclic phosphate + choline. The enzyme catalyses a 1-acyl-sn-glycero-3-phosphoethanolamine = a 1-acyl-sn-glycero-2,3-cyclic phosphate + ethanolamine. Dermonecrotic toxins cleave the phosphodiester linkage between the phosphate and headgroup of certain phospholipids (sphingolipid and lysolipid substrates), forming an alcohol (often choline) and a cyclic phosphate. Acts on sphingomyelin (SM). It may also act on ceramide phosphoethanolamine (CPE), lysophosphatidylcholine (LPC) and lysophosphatidylethanolamine (LPE), but not on lysophosphatidylserine (LPS), and lysophosphatidylglycerol (LPG). It acts by transphosphatidylation, releasing exclusively cyclic phosphate products as second products. Induces dermonecrosis, hemolysis, increased vascular permeability, edema, inflammatory response, and platelet aggregation. This chain is Dermonecrotic toxin SPH (SPH), found in Ixodes scapularis (Black-legged tick).